Consider the following 413-residue polypeptide: Gamma-glutamyl phosphate reductase (413 aa).

It belongs to the gamma-glutamyl phosphate reductase family.

It localises to the cytoplasm. The enzyme catalyses L-glutamate 5-semialdehyde + phosphate + NADP(+) = L-glutamyl 5-phosphate + NADPH + H(+). It functions in the pathway amino-acid biosynthesis; L-proline biosynthesis; L-glutamate 5-semialdehyde from L-glutamate: step 2/2. In terms of biological role, catalyzes the NADPH-dependent reduction of L-glutamate 5-phosphate into L-glutamate 5-semialdehyde and phosphate. The product spontaneously undergoes cyclization to form 1-pyrroline-5-carboxylate. The sequence is that of Gamma-glutamyl phosphate reductase from Caulobacter vibrioides (strain ATCC 19089 / CIP 103742 / CB 15) (Caulobacter crescentus).